The following is a 119-amino-acid chain: Cytochrome c55X (119 aa).

The first 20 residues, 1-20 (MNAPPDFRRAASHALWLALA), serve as a signal peptide directing secretion. Cys-51, Cys-54, and His-55 together coordinate heme c.

In terms of processing, binds 1 heme c group covalently per subunit.

Its subcellular location is the periplasm. Its function is as follows. Monoheme c-type cytochrome. This Pseudomonas aeruginosa (strain ATCC 15692 / DSM 22644 / CIP 104116 / JCM 14847 / LMG 12228 / 1C / PRS 101 / PAO1) protein is Cytochrome c55X (nirC).